A 322-amino-acid chain; its full sequence is Protease HtpX homolog (322 aa).

2 consecutive transmembrane segments (helical) span residues 19–39 (ILLI…CYLL) and 61–81 (FINL…IAYF). Zn(2+) is bound at residue H165. E166 is a catalytic residue. Residue H169 coordinates Zn(2+). 2 consecutive transmembrane segments (helical) span residues 175-195 (VRLL…AQIA) and 216-236 (ILIL…ATLM). Zn(2+) is bound at residue E245.

It belongs to the peptidase M48B family. Zn(2+) is required as a cofactor.

The protein localises to the cell inner membrane. In Bacteroides fragilis (strain ATCC 25285 / DSM 2151 / CCUG 4856 / JCM 11019 / LMG 10263 / NCTC 9343 / Onslow / VPI 2553 / EN-2), this protein is Protease HtpX homolog.